Here is a 758-residue protein sequence, read N- to C-terminus: Microtubule-associated protein tau (758 aa).

The span at methionine 1–glutamine 26 shows a compositional bias: basic and acidic residues. A disordered region spans residues methionine 1–valine 573. Alanine 2 is subject to N-acetylalanine. Residues tyrosine 18 and tyrosine 29 each carry the phosphotyrosine modification. A Glycyl lysine isopeptide (Lys-Gly) (interchain with G-Cter in ubiquitin) cross-link involves residue lysine 44. Phosphoserine occurs at positions 46 and 61. The segment covering serine 61 to threonine 71 has biased composition (polar residues). Phosphothreonine is present on residues threonine 69, threonine 71, and threonine 111. Basic and acidic residues-rich tracts occupy residues glutamate 179 to lysine 189 and glycine 207 to glutamate 216. Serine 214 carries the post-translational modification Phosphoserine. A compositionally biased stretch (acidic residues) spans glutamate 217 to serine 228. A compositionally biased stretch (basic and acidic residues) spans glutamate 314–arginine 323. Positions alanine 325–proline 340 are enriched in low complexity. Basic and acidic residues-rich tracts occupy residues glutamate 344–glutamate 356 and lysine 381–alanine 393. Positions lysine 440–serine 452 are enriched in polar residues. The span at lysine 455–threonine 466 shows a compositional bias: basic and acidic residues. Phosphothreonine is present on threonine 470. Position 472 is an omega-N-methylarginine (arginine 472). Lysine 480 carries the post-translational modification N6,N6-dimethyllysine; alternate. Lysine 480 carries the post-translational modification N6-acetyllysine; alternate. 3 positions are modified to phosphothreonine: threonine 486, threonine 492, and threonine 498. Residues lysine 491 to glycine 503 are compositionally biased toward pro residues. A phosphoserine mark is found at serine 502, serine 508, and serine 512. The span at glutamate 504–serine 531 shows a compositional bias: low complexity. Tyrosine 514 is subject to Phosphotyrosine. Phosphoserine occurs at positions 515, 516, and 519. Threonine 522 and threonine 529 each carry phosphothreonine. Serine 531 carries the phosphoserine modification. Threonine 534 carries the post-translational modification Phosphothreonine. Lysine 542 bears the N6-acetyllysine mark. Threonine 548 is modified (phosphothreonine). 2 positions are modified to phosphoserine: serine 552 and serine 554. 4 Tau/MAP repeats span residues glutamine 561–lysine 591, valine 592–serine 622, valine 623–glutamine 653, and valine 654–histidine 685. Residue lysine 571 forms a Glycyl lysine isopeptide (Lys-Gly) (interchain with G-Cter in ubiquitin) linkage. Lysine 576 is subject to N6-acetyllysine; alternate. The residue at position 576 (lysine 576) is an N6-methyllysine; alternate. Residue lysine 576 forms a Glycyl lysine isopeptide (Lys-Gly) (interchain with G-Cter in ubiquitin); alternate linkage. Residue serine 579 is modified to Phosphoserine. Lysine 584 is covalently cross-linked (Glycyl lysine isopeptide (Lys-Gly) (interchain with G-Cter in ubiquitin)). Position 598 is an N6-acetyllysine; alternate (lysine 598). Residue lysine 598 forms a Glycyl lysine isopeptide (Lys-Gly) (interchain with G-Cter in ubiquitin); alternate linkage. A phosphoserine mark is found at serine 602 and serine 606. The residue at position 607 (lysine 607) is an N6-acetyllysine. Serine 610 bears the Phosphoserine mark. The residue at position 615 (lysine 615) is an N6-acetyllysine; alternate. Residue lysine 615 forms a Glycyl lysine isopeptide (Lys-Gly) (interchain with G-Cter in ubiquitin); alternate linkage. A Phosphoserine modification is found at serine 622. Lysine 628 is subject to N6,N6-dimethyllysine; alternate. An N6-acetyllysine; alternate mark is found at lysine 628, lysine 634, and lysine 638. Glycyl lysine isopeptide (Lys-Gly) (interchain with G-Cter in ubiquitin); alternate cross-links involve residues lysine 628, lysine 634, and lysine 638. The residue at position 641 (serine 641) is a Phosphoserine. N6-acetyllysine; alternate occurs at positions 648, 660, and 664. Glycyl lysine isopeptide (Lys-Gly) (interchain with G-Cter in ubiquitin); alternate cross-links involve residues lysine 648, lysine 660, and lysine 664. Arginine 666 is modified (omega-N-methylarginine). Serine 669 carries the phosphoserine modification. Lysine 670 participates in a covalent cross-link: Glycyl lysine isopeptide (Lys-Gly) (interchain with G-Cter in ubiquitin). Serine 673 carries the phosphoserine modification. Lysine 686 carries the N6-acetyllysine; alternate modification. A Glycyl lysine isopeptide (Lys-Gly) (interchain with G-Cter in ubiquitin); alternate cross-link involves residue lysine 686. Residue lysine 692 forms a Glycyl lysine isopeptide (Lys-Gly) (interchain with G-Cter in ubiquitin) linkage. Lysine 702 carries the post-translational modification N6-acetyllysine; alternate. A Glycyl lysine isopeptide (Lys-Gly) (interchain with G-Cter in ubiquitin); alternate cross-link involves residue lysine 702. At tyrosine 711 the chain carries Phosphotyrosine. Phosphoserine is present on residues serine 713 and serine 717. Residues valine 715–isoleucine 734 are disordered. Residues glycine 718–serine 733 show a composition bias toward polar residues. A Phosphothreonine modification is found at threonine 720. Residues serine 721, serine 726, serine 733, and serine 739 each carry the phosphoserine modification. Threonine 744 is modified (phosphothreonine).

As to quaternary structure, interacts with MARK1, MARK2, MARK3 and MARK4. Interacts with SQSTM1 when polyubiquitinated. Interacts with PSMC2 through SQSTM1. Interacts with FKBP4. Binds to CSNK1D. Interacts with SGK1. Interacts with EPM2A; the interaction dephosphorylates MAPT at Ser-396. Interacts with PIN1. Interacts with LRRK2. Interacts with LRP1, leading to endocytosis; this interaction is reduced in the presence of LRPAP1/RAP. Polyubiquitinated. Requires functional TRAF6 and may provoke SQSTM1-dependent degradation by the proteasome. Post-translationally, phosphorylation at various serine and threonine residues in S-P or T-P motifs by proline-directed protein kinases (PDPK1, CDK1, CDK5, GSK3, MAPK) (a few sites per protein in interphase, more in mitosis), and at serine residues in K-X-G-S motifs by MAP/microtubule affinity-regulating kinase (MARK1, MARK2, MARK3 or MARK4), causing detachment from microtubules, and their disassembly. Phosphorylation at Ser-579 by BRSK1 and BRSK2 in neurons affects ability to bind microtubules and plays a role in neuron polarization. Phosphorylated by PHK. Dephosphorylation at several serine and threonine residues by the serine/threonine phosphatase PPP5C. Phosphorylation at Ser-214 by SGK1 mediates microtubule depolymerization and neurite formation in hippocampal neurons.

It is found in the cytoplasm. It localises to the cytosol. The protein localises to the cell membrane. The protein resides in the cytoskeleton. Its subcellular location is the cell projection. It is found in the axon. It localises to the dendrite. In terms of biological role, promotes microtubule assembly and stability, and might be involved in the establishment and maintenance of neuronal polarity. The C-terminus binds axonal microtubules while the N-terminus binds neural plasma membrane components, suggesting that tau functions as a linker protein between both. Axonal polarity is predetermined by tau localization (in the neuronal cell) in the domain of the cell body defined by the centrosome. The short isoforms allow plasticity of the cytoskeleton whereas the longer isoforms may preferentially play a role in its stabilization. The polypeptide is Microtubule-associated protein tau (MAPT) (Pongo pygmaeus (Bornean orangutan)).